A 303-amino-acid polypeptide reads, in one-letter code: 2-dehydropantoate 2-reductase (303 aa).

NADP(+) is bound by residues 7 to 12, Asn-98, and Ala-122; that span reads GCGALG. Asn-98 lines the substrate pocket. Lys-176 acts as the Proton donor in catalysis. Residues Asn-180, Asn-184, Asn-194, and Ser-244 each coordinate substrate. Glu-256 is a binding site for NADP(+).

Belongs to the ketopantoate reductase family. As to quaternary structure, monomer.

The protein localises to the cytoplasm. The catalysed reaction is (R)-pantoate + NADP(+) = 2-dehydropantoate + NADPH + H(+). The protein operates within cofactor biosynthesis; (R)-pantothenate biosynthesis; (R)-pantoate from 3-methyl-2-oxobutanoate: step 2/2. Its function is as follows. Catalyzes the NADPH-dependent reduction of ketopantoate into pantoic acid. Has a strong preference for NADPH over NADH as the electron acceptor. Pantoate, ketoisovalerate, oxaloacetate, pyruvate, 3-hydroxypyruvate, alpha-ketoglutarate, alpha-ketobutyrate, and acetaldehyde cannot serve as substrates for reduction. This Salmonella typhimurium (strain LT2 / SGSC1412 / ATCC 700720) protein is 2-dehydropantoate 2-reductase.